Reading from the N-terminus, the 430-residue chain is Adenylosuccinate synthetase (430 aa).

GTP-binding positions include 12-18 (GDEGKGK) and 40-42 (GHT). Asp-13 serves as the catalytic Proton acceptor. Mg(2+) is bound by residues Asp-13 and Gly-40. Residues 13 to 16 (DEGK), 38 to 41 (NAGH), Thr-128, Arg-142, Gln-223, Thr-238, and Arg-302 each bind IMP. Catalysis depends on His-41, which acts as the Proton donor. Residue 298–304 (VNTGRKR) participates in substrate binding. GTP is bound by residues Arg-304, 330–332 (KLD), and 412–414 (GVG).

This sequence belongs to the adenylosuccinate synthetase family. As to quaternary structure, homodimer. Mg(2+) serves as cofactor.

It localises to the cytoplasm. The catalysed reaction is IMP + L-aspartate + GTP = N(6)-(1,2-dicarboxyethyl)-AMP + GDP + phosphate + 2 H(+). It participates in purine metabolism; AMP biosynthesis via de novo pathway; AMP from IMP: step 1/2. In terms of biological role, plays an important role in the de novo pathway of purine nucleotide biosynthesis. Catalyzes the first committed step in the biosynthesis of AMP from IMP. This is Adenylosuccinate synthetase from Corynebacterium glutamicum (strain ATCC 13032 / DSM 20300 / JCM 1318 / BCRC 11384 / CCUG 27702 / LMG 3730 / NBRC 12168 / NCIMB 10025 / NRRL B-2784 / 534).